We begin with the raw amino-acid sequence, 297 residues long: Phosphoribosylaminoimidazole-succinocarboxamide synthase (297 aa).

Belongs to the SAICAR synthetase family.

It catalyses the reaction 5-amino-1-(5-phospho-D-ribosyl)imidazole-4-carboxylate + L-aspartate + ATP = (2S)-2-[5-amino-1-(5-phospho-beta-D-ribosyl)imidazole-4-carboxamido]succinate + ADP + phosphate + 2 H(+). It functions in the pathway purine metabolism; IMP biosynthesis via de novo pathway; 5-amino-1-(5-phospho-D-ribosyl)imidazole-4-carboxamide from 5-amino-1-(5-phospho-D-ribosyl)imidazole-4-carboxylate: step 1/2. This is Phosphoribosylaminoimidazole-succinocarboxamide synthase from Mycobacterium sp. (strain KMS).